Consider the following 350-residue polypeptide: tRNA-splicing endonuclease (350 aa).

Active-site residues include Tyr-286, His-297, and Lys-328.

The protein belongs to the tRNA-intron endonuclease family. Archaeal long subfamily. Homodimer.

The enzyme catalyses pretRNA = a 3'-half-tRNA molecule with a 5'-OH end + a 5'-half-tRNA molecule with a 2',3'-cyclic phosphate end + an intron with a 2',3'-cyclic phosphate and a 5'-hydroxyl terminus.. Functionally, endonuclease that removes tRNA introns. Cleaves pre-tRNA at the 5'- and 3'-splice sites to release the intron. The products are an intron and two tRNA half-molecules bearing 2',3' cyclic phosphate and 5'-OH termini. Recognizes a pseudosymmetric substrate in which 2 bulged loops of 3 bases are separated by a stem of 4 bp. The polypeptide is tRNA-splicing endonuclease (Methanosarcina acetivorans (strain ATCC 35395 / DSM 2834 / JCM 12185 / C2A)).